Reading from the N-terminus, the 69-residue chain is Small, acid-soluble spore protein C4 (69 aa).

Belongs to the alpha/beta-type SASP family.

In terms of biological role, SASP are bound to spore DNA. They are double-stranded DNA-binding proteins that cause DNA to change to an a-like conformation. They protect the DNA backbone from chemical and enzymatic cleavage and are thus involved in dormant spore's high resistance to UV light. The protein is Small, acid-soluble spore protein C4 (SASP-C4) of Priestia megaterium (Bacillus megaterium).